Here is a 304-residue protein sequence, read N- to C-terminus: Methionyl-tRNA formyltransferase (304 aa).

107–110 (SLLP) lines the (6S)-5,6,7,8-tetrahydrofolate pocket.

It belongs to the Fmt family.

It catalyses the reaction L-methionyl-tRNA(fMet) + (6R)-10-formyltetrahydrofolate = N-formyl-L-methionyl-tRNA(fMet) + (6S)-5,6,7,8-tetrahydrofolate + H(+). Attaches a formyl group to the free amino group of methionyl-tRNA(fMet). The formyl group appears to play a dual role in the initiator identity of N-formylmethionyl-tRNA by promoting its recognition by IF2 and preventing the misappropriation of this tRNA by the elongation apparatus. This chain is Methionyl-tRNA formyltransferase, found in Coprothermobacter proteolyticus (strain ATCC 35245 / DSM 5265 / OCM 4 / BT).